We begin with the raw amino-acid sequence, 285 residues long: Glutamate racemase (285 aa).

Substrate is bound by residues 28–29 and 60–61; these read DS and YG. The active-site Proton donor/acceptor is Cys-92. Residue 93–94 coordinates substrate; sequence NT. Cys-204 serves as the catalytic Proton donor/acceptor. Substrate is bound at residue 205–206; it reads TH.

Belongs to the aspartate/glutamate racemases family.

It carries out the reaction L-glutamate = D-glutamate. It functions in the pathway cell wall biogenesis; peptidoglycan biosynthesis. In terms of biological role, provides the (R)-glutamate required for cell wall biosynthesis. The polypeptide is Glutamate racemase (Shigella flexneri serotype 5b (strain 8401)).